Reading from the N-terminus, the 400-residue chain is Lysophospholipid transporter LplT (400 aa).

The next 12 membrane-spanning stretches (helical) occupy residues 19–39 (VIVA…ATLA), 53–73 (VLQM…GQIA), 91–111 (AGAA…LVGI), 139–159 (LMEA…GVLA), 164–184 (IAAL…NLFI), 195–213 (SWRL…VVLW), 227–247 (LFWG…PVAL), 257–277 (YLNA…AKLV), 281–301 (TVSR…IFSL), 304–324 (ALLP…FFVV), 352–372 (NSAM…GVPA), and 373–393 (VAIG…LWIW).

Belongs to the major facilitator superfamily. LplT (TC 2.A.1.42) family.

The protein localises to the cell inner membrane. Its function is as follows. Catalyzes the facilitated diffusion of 2-acyl-glycero-3-phosphoethanolamine (2-acyl-GPE) into the cell. In Salmonella newport (strain SL254), this protein is Lysophospholipid transporter LplT.